The following is an 888-amino-acid chain: 3-hydroxy-3-methylglutaryl-coenzyme A reductase (888 aa).

Residues 1-9 (MLSRLFRMH) lie on the Cytoplasmic side of the membrane. Residues 10–39 (GLFVASHPWEVIVGTVTLTICMMSMNMFTG) form a helical membrane-spanning segment. The Lumenal segment spans residues 40–56 (NDKICGWNYECPKFEED). The helical transmembrane segment at 57 to 78 (VLSSDIIILTITRCIAILYIYF) threads the bilayer. Positions 61-218 (DIIILTITRC…MTFFPACVSL (158 aa)) constitute an SSD domain. Residues 75 to 78 (YIYF) carry the INSIG-binding motif motif. The Cytoplasmic segment spans residues 79–89 (QFQNLRQLGSK). Lys89 is covalently cross-linked (Glycyl lysine isopeptide (Lys-Gly) (interchain with G-Cter in ubiquitin)). A helical transmembrane segment spans residues 90-114 (YILGIAGLFTIFSSFVFSTVVIHFL). The Lumenal segment spans residues 115 to 123 (DKELTGLNE). The helical transmembrane segment at 124–149 (ALPFFLLLIDLSRASALAKFALSSNS) threads the bilayer. Over 150–159 (QDEVRENIAR) the chain is Cytoplasmic. The helical transmembrane segment at 160-187 (GMAILGPTFTLDALVECLVIGVGTMSGV) threads the bilayer. Residues 188–191 (RQLE) are Lumenal-facing. A helical membrane pass occupies residues 192–220 (IMCCFGCMSVLANYFVFMTFFPACVSLVL). Topologically, residues 221–248 (ELSRESREGRPIWQLSHFARVLEEEENK) are cytoplasmic. Residue Lys248 forms a Glycyl lysine isopeptide (Lys-Gly) (interchain with G-Cter in ubiquitin) linkage. A helical transmembrane segment spans residues 249–275 (PNPVTQRVKMIMSLGLVLVHAHSRWIA). The Lumenal segment spans residues 276–314 (DPSPQNSTADNSKVSLGLDENVSKRIEPSVSLWQFYLSK). N-linked (GlcNAc...) asparagine glycans are attached at residues Asn281 and Asn296. Residues 315 to 339 (MISMDIEQVITLSLALLLAVKYIFF) traverse the membrane as a helical segment. Over 340–888 (EQAETESTLS…LEGACTKKAA (549 aa)) the chain is Cytoplasmic. Catalysis depends on charge relay system residues Glu559, Lys691, and Asp767. His866 functions as the Proton donor in the catalytic mechanism. Phosphoserine; by AMPK is present on Ser872.

The protein belongs to the HMG-CoA reductase family. As to quaternary structure, homotetramer. Homodimer. Interacts (via its SSD) with INSIG1; the interaction, accelerated by sterols, leads to the recruitment of HMGCR to AMFR/gp78 for its ubiquitination by the sterol-mediated ERAD pathway. Interacts with UBIAD1. In terms of processing, undergoes sterol-mediated ubiquitination and ER-associated degradation (ERAD). Accumulation of sterols in the endoplasmic reticulum (ER) membrane, triggers binding of the reductase to the ER membrane protein INSIG1 or INSIG2. The INSIG1 binding leads to the recruitment of the ubiquitin ligase, AMFR/gp78, RNF139 or RNF145, initiating ubiquitination of the reductase. The ubiquitinated reductase is then extracted from the ER membrane and delivered to cytosolic 26S proteosomes by a mechanism probably mediated by the ATPase Valosin-containing protein VCP/p97. The INSIG2-binding leads to the recruitment of the ubiquitin ligase RNF139, initiating ubiquitination of the reductase. Lys-248 is the main site of ubiquitination. Ubiquitination is enhanced by the presence of a geranylgeranylated protein. N-glycosylated. Deglycosylated by NGLY1 on release from the endoplasmic reticulum (ER) in a sterol-mediated manner. Post-translationally, phosphorylated. Phosphorylation at Ser-872 reduces the catalytic activity.

Its subcellular location is the endoplasmic reticulum membrane. It is found in the peroxisome membrane. The catalysed reaction is (R)-mevalonate + 2 NADP(+) + CoA = (3S)-3-hydroxy-3-methylglutaryl-CoA + 2 NADPH + 2 H(+). The protein operates within metabolic intermediate biosynthesis; (R)-mevalonate biosynthesis; (R)-mevalonate from acetyl-CoA: step 3/3. With respect to regulation, regulated by a negative feedback mechanism through sterols and non-sterol metabolites derived from mevalonate. Phosphorylation at Ser-872 down-regulates the catalytic activity. Catalyzes the conversion of (3S)-hydroxy-3-methylglutaryl-CoA (HMG-CoA) to mevalonic acid, the rate-limiting step in the synthesis of cholesterol and other isoprenoids, thus plays a critical role in cellular cholesterol homeostasis. This is 3-hydroxy-3-methylglutaryl-coenzyme A reductase (HMGCR) from Oryctolagus cuniculus (Rabbit).